Consider the following 151-residue polypeptide: Large ribosomal subunit protein bL9 (151 aa).

The protein belongs to the bacterial ribosomal protein bL9 family.

Its function is as follows. Binds to the 23S rRNA. This is Large ribosomal subunit protein bL9 from Prochlorococcus marinus (strain MIT 9312).